We begin with the raw amino-acid sequence, 248 residues long: MILELDCGNSLIKWRVIEGAARSVAGGLAESDDALVEQLTSQQALPVRACRLVSVRSEQETSQLVARLEQLFPVSALVASSGKQLAGVRNGYLDYQRLGLDRWLALVAAHHLAKKACLVIDLGTAVTSDLVAADGVHLGGYICPGMTLMRSQLRTHTRRIRYDDAEARRALASLQPGQATAEAVERGCLLMLRGFVREQYAMACELLGPDCEIFLTGGDAELVRDELAGARIMPDLVFVGLALACPIE.

6–13 (DCGNSLIK) is an ATP binding site. Residues Tyr92 and 99-102 (GLDR) contribute to the substrate site. The Proton acceptor role is filled by Asp101. Asp121 is a binding site for K(+). Thr124 lines the ATP pocket. Thr180 serves as a coordination point for substrate.

Belongs to the type III pantothenate kinase family. In terms of assembly, homodimer. Requires NH4(+) as cofactor. It depends on K(+) as a cofactor.

The protein localises to the cytoplasm. The enzyme catalyses (R)-pantothenate + ATP = (R)-4'-phosphopantothenate + ADP + H(+). It functions in the pathway cofactor biosynthesis; coenzyme A biosynthesis; CoA from (R)-pantothenate: step 1/5. Functionally, catalyzes the phosphorylation of pantothenate (Pan), the first step in CoA biosynthesis. In Pseudomonas aeruginosa (strain LESB58), this protein is Type III pantothenate kinase.